A 617-amino-acid polypeptide reads, in one-letter code: Erythritol-mannosyl-transferase 1 (617 aa).

Disordered regions lie at residues Arg365 to Arg396 and Arg567 to Pro617. A compositionally biased stretch (polar residues) spans Gly371 to Ala381. Basic and acidic residues predominate over residues Lys386–Arg396. A compositionally biased stretch (polar residues) spans Thr578–Ser603.

It belongs to the UDP-glycosyltransferase family.

Its pathway is secondary metabolite biosynthesis. In terms of biological role, glycosyltransferase; part of the gene cluster that mediates the biosynthesis of mannosylerythritol lipids (MELs), surface-active substances that enhance the availability of water-insoluble substrates. Depending on the number of acetyl groups, mannosylerythritol lipids can be differentiated into MEL A (fully acetylated), MEL B and MEL C (monoacetylated at R-6 and R-4, respectively), and the fully deacetylated MEL D. The first step in the pathway is the generation of mannosylerythritol by the glycosyltransferase EMT1 which catalyzes the transfer of GDP-mannose to the C-4 atom of meso-erythritol. This reaction has to be stereospecific, since only mannosyl-D-erythritol is generated. The produced disaccharide is subsequently acylated with fatty acids of various lengths by the acyltransferases MAC1 and MAC2 at positions C-2 and C-3, repectively. The existence of MEL derivatives which carry an acetyl group at C-2 implies that at least MAC1 also accepts acetyl-CoA as a donor. The final step of MEL biosynthesis is the acetylation of the fully acylated mannosylerythritol lipids catalyzed by the acetyl-CoA-dependent acetyltransferase MAT1. MAT1 displays a relaxed regioselectivity and is able to transfer acetylgroups to both positions C-4 and C-6 of the mannosyl moiety. The sequence is that of Erythritol-mannosyl-transferase 1 from Pseudozyma antarctica (strain T-34) (Yeast).